Here is a 526-residue protein sequence, read N- to C-terminus: Protein mono-ADP-ribosyltransferase PARP3 (526 aa).

The tract at residues 1–55 (MAPKRRAPPASQPADGGKKAKGGQEEEEDAWSSALNALKTAPREKPPATIDGQCP) is disordered. Residues 61–151 (DAKVYEDYDC…DNFVAQPGKY (91 aa)) enclose the WGR domain. The PARP alpha-helical domain maps to 183 to 301 (PCALDETTQK…DIEVAQSLQA (119 aa)). The region spanning 312–526 (HPLDRDYALL…RIRYLVQLHF (215 aa)) is the PARP catalytic domain.

It belongs to the ARTD/PARP family.

The protein localises to the nucleus. It is found in the chromosome. The protein resides in the cytoplasm. Its subcellular location is the cytoskeleton. It localises to the microtubule organizing center. The protein localises to the centrosome. It is found in the centriole. It carries out the reaction L-aspartyl-[protein] + NAD(+) = 4-O-(ADP-D-ribosyl)-L-aspartyl-[protein] + nicotinamide. The catalysed reaction is L-glutamyl-[protein] + NAD(+) = 5-O-(ADP-D-ribosyl)-L-glutamyl-[protein] + nicotinamide. It catalyses the reaction L-lysyl-[protein] + NAD(+) = N(6)-(ADP-D-ribosyl)-L-lysyl-[protein] + nicotinamide + H(+). Functionally, mono-ADP-ribosyltransferase that mediates mono-ADP-ribosylation of target proteins and plays a key role in the response to DNA damage. Mediates mono-ADP-ribosylation of glutamate, aspartate or lysine residues on target proteins. In contrast to PARP1 and PARP2, it is not able to mediate poly-ADP-ribosylation. Involved in DNA repair by mediating mono-ADP-ribosylation of a limited number of acceptor proteins involved in chromatin architecture and in DNA metabolism, such as histone H2B, XRCC5 and XRCC6. ADP-ribosylation follows DNA damage and appears as an obligatory step in a detection/signaling pathway leading to the reparation of DNA strand breaks. Involved in single-strand break repair by catalyzing mono-ADP-ribosylation of histone H2B on 'Glu-2' (H2BE2ADPr) of nucleosomes containing nicked DNA. Cooperates with the XRCC5-XRCC6 (Ku80-Ku70) heterodimer to limit end-resection thereby promoting accurate NHEJ. Associates with a number of DNA repair factors and is involved in the response to exogenous and endogenous DNA strand breaks. Together with APLF, promotes the retention of the LIG4-XRCC4 complex on chromatin and accelerate DNA ligation during non-homologous end-joining (NHEJ). In addition to proteins, also able to ADP-ribosylate DNA: mediates DNA mono-ADP-ribosylation of DNA strand break termini via covalent addition of a single ADP-ribose moiety to a 5'- or 3'-terminal phosphate residues in DNA containing multiple strand breaks. The chain is Protein mono-ADP-ribosyltransferase PARP3 from Gallus gallus (Chicken).